A 1076-amino-acid polypeptide reads, in one-letter code: Protein EXPORTIN 1B (1076 aa).

Residues 37 to 103 enclose the Importin N-terminal domain; sequence ADNILRDLKA…KNYISDVIVQ (67 aa). 11 HEAT repeats span residues 135 to 171, 232 to 267, 282 to 319, 475 to 514, 564 to 601, 613 to 650, 683 to 720, 757 to 794, 799 to 836, 895 to 935, and 943 to 988; these read AKWK…EVFD, IFES…LNFG, MNQL…FFTS, DTEK…SMVV, KFLK…KCKR, PFVS…AESD, LKEP…IFLD, REIL…DYAR, ARES…CTLE, ETGL…VLTD, and KLHV…YTTK.

It belongs to the exportin family. Present in mature pollen grains, unpollinated pistils, and 2-week-old seedlings.

The protein resides in the nucleus. Its subcellular location is the nuclear pore complex. It is found in the nucleus membrane. Its function is as follows. Receptor for the leucine-rich nuclear export signal (NES). Binds cooperatively to the NES on its target protein and to the small GTPase Ran in its active GTP-bound form. Required for the maternal-to-embryonic transition and during gametophyte development. The polypeptide is Protein EXPORTIN 1B (Arabidopsis thaliana (Mouse-ear cress)).